Reading from the N-terminus, the 930-residue chain is A disintegrin and metalloproteinase with thrombospondin motifs 5 (930 aa).

Residues 1–21 (MRLEWAPLLLLLLLLSASCLS) form the signal peptide. Positions 22 to 261 (LAADSPAAAP…PQTWWRRRRR (240 aa)) are excised as a propeptide. A compositionally biased stretch (low complexity) spans 31-53 (PAQDKTRQPQAAAAAAEPDQPQG). 2 disordered regions span residues 31-68 (PAQD…LAGQ) and 207-231 (ASCE…SRRR). Positions 207-214 (ASCETPAS) match the Cysteine switch motif. Cysteine 209 provides a ligand contact to Zn(2+). Over residues 211–225 (TPASPSGPQESPSVH) the composition is skewed to polar residues. In terms of domain architecture, Peptidase M12B spans 267-476 (RQVELLLVAD…GHGNCLLDLP (210 aa)). Disulfide bonds link cysteine 342–cysteine 394, cysteine 371–cysteine 376, cysteine 388–cysteine 471, cysteine 426–cysteine 455, cysteine 497–cysteine 519, cysteine 508–cysteine 529, cysteine 514–cysteine 548, and cysteine 542–cysteine 553. Histidine 410 contributes to the Zn(2+) binding site. Glutamate 411 is an active-site residue. Positions 414 and 420 each coordinate Zn(2+). One can recognise a Disintegrin domain in the interval 485–566 (ELPGQTYDAT…TKKKYYSTSS (82 aa)). Asparagine 498 carries an N-linked (GlcNAc...) asparagine glycan. The TSP type-1 1 domain occupies 567–622 (HGNWGSWGPWGQCSRSCGGGVQFAYRHCNNPAPRNSGRYCTGKRAIYRSCSVTPCP). C-linked (Man) tryptophan glycosylation is found at tryptophan 570 and tryptophan 573. Disulfide bonds link cysteine 579–cysteine 616, cysteine 583–cysteine 621, and cysteine 594–cysteine 606. Residue serine 582 is glycosylated (O-linked (Fuc...) serine). 3 N-linked (GlcNAc...) asparagine glycosylation sites follow: asparagine 728, asparagine 802, and asparagine 807. The tract at residues 732-874 (TKIIGTFNKK…HGSNKVGPHS (143 aa)) is spacer. Residues 875-929 (TQLQWVTGPWLACSRTCDTGWHTRTVQCQDGNRKLAKGCLLSQRPSAFKQCLLKK) form the TSP type-1 2 domain.

Requires Zn(2+) as cofactor. In terms of processing, the precursor is cleaved by furin and PCSK7 outside of the cell. Post-translationally, glycosylated. Can be O-fucosylated by POFUT2 on a serine or a threonine residue found within the consensus sequence C1-X(2)-(S/T)-C2-G of the TSP type-1 repeat domains where C1 and C2 are the first and second cysteine residue of the repeat, respectively. Fucosylated repeats can then be further glycosylated by the addition of a beta-1,3-glucose residue by the glucosyltransferase, B3GALTL. Fucosylation mediates the efficient secretion of ADAMTS family members. Can also be C-glycosylated with one or two mannose molecules on tryptophan residues within the consensus sequence W-X-X-W of the TPRs, and N-glycosylated. These other glycosylations can also facilitate secretion. As to expression, expressed in skeletal muscle.

It is found in the secreted. The protein localises to the extracellular space. The protein resides in the extracellular matrix. In terms of biological role, metalloproteinase that plays an important role in connective tissue organization, development, inflammation and cell migration. Extracellular matrix (ECM) degrading enzyme that shows proteolytic activity toward the hyalectan group of chondroitin sulfate proteoglycans (CSPGs) including ACAN, VCAN, BCAN and NCAN. Cleavage within the hyalectans occurs at Glu-Xaa recognition motifs. Plays a role in embryonic development, including limb and cardiac morphogenesis, and skeletal muscle development through its VCAN remodeling properties. Cleaves VCAN in the pericellular matrix surrounding myoblasts, facilitating myoblast contact and fusion which is required for skeletal muscle development and regeneration. Participates in the development of brown adipose tissue and browning of white adipose tissue. Plays an important role for T-lymphocyte migration from draining lymph nodes following viral infection. The protein is A disintegrin and metalloproteinase with thrombospondin motifs 5 (Adamts5) of Mus musculus (Mouse).